Here is a 193-residue protein sequence, read N- to C-terminus: CASP-like protein 1F3 (193 aa).

Positions 1–25 (MASPQNTSQKRFFQANSPGGMPTAS) are disordered. Residues 1–35 (MASPQNTSQKRFFQANSPGGMPTASQSQRSRILAQ) are Cytoplasmic-facing. The chain crosses the membrane as a helical span at residues 36–56 (ITLRFLAIAFTVTAIPVMITA). Residues 57 to 78 (KEPVSLLGLAITPSYKQSSAMK) are Extracellular-facing. The chain crosses the membrane as a helical span at residues 79 to 99 (FLLGVNATVFAFTALSMLFVW). Residues 100-118 (PLRRSGSKPINYFFLHLHD) lie on the Cytoplasmic side of the membrane. A helical transmembrane segment spans residues 119 to 139 (MVMTLLLISGCAAATAVGYLS). Topologically, residues 140 to 161 (QYGQPETYWSPICDIVKKFCHQ) are extracellular. The chain crosses the membrane as a helical span at residues 162–182 (MLISTVLSYLAFFCYLALNIL). At 183 to 193 (SVHKLMSRATE) the chain is on the cytoplasmic side.

It belongs to the Casparian strip membrane proteins (CASP) family. As to quaternary structure, homodimer and heterodimers.

It localises to the cell membrane. In Populus trichocarpa (Western balsam poplar), this protein is CASP-like protein 1F3.